We begin with the raw amino-acid sequence, 428 residues long: MSAIVDVIAREIIDSRGNPTIEADVLLESGVLGRASVPSGASVGTREAVELRDGDTQRYYGKGVLKAVENVNGEISEEIMGLDATEQCFIDKTLIELDGSENKSRLGANAILAVSLAVAKAAAEESSLPLYRYLGGTNSKWLPVPMMNLINGGVHANNRLDMQEFMIIPLGLPSLREAVRCGAEVFGKLRTLLHKKNLPTTVGDEGGFAPGFAHNEEALGLIVQAIDEAGYQPGSEVAIGVDCASSEFFRDGKYHLAVDGLSLTSAQFIDYLASWVEKYPIISIEDGISEQDWDGWKLLTERLGQTVQLVGDDIFATNTKILKKGINRNIANSILIKINQIGTLTETLNAIEMAKCAGYTAVVSHRSGETEDTMIADIAVGTNALQIKTGSLSRSDRLAKYNQLLRIEEDLGDVAQYAGRSAFYQLKP.

Gln163 provides a ligand contact to (2R)-2-phosphoglycerate. Glu205 (proton donor) is an active-site residue. Mg(2+)-binding residues include Asp242, Glu285, and Asp312. 4 residues coordinate (2R)-2-phosphoglycerate: Lys337, Arg366, Ser367, and Lys388. Lys337 serves as the catalytic Proton acceptor.

The protein belongs to the enolase family. It depends on Mg(2+) as a cofactor.

It is found in the cytoplasm. Its subcellular location is the secreted. It localises to the cell surface. It carries out the reaction (2R)-2-phosphoglycerate = phosphoenolpyruvate + H2O. Its pathway is carbohydrate degradation; glycolysis; pyruvate from D-glyceraldehyde 3-phosphate: step 4/5. Catalyzes the reversible conversion of 2-phosphoglycerate (2-PG) into phosphoenolpyruvate (PEP). It is essential for the degradation of carbohydrates via glycolysis. This is Enolase from Nitrosomonas eutropha (strain DSM 101675 / C91 / Nm57).